We begin with the raw amino-acid sequence, 319 residues long: Probable cytochrome c oxidase subunit 2 (319 aa).

Residues M1–G33 form the signal peptide. A run of 2 helical transmembrane segments spans residues W63–F83 and M101–F121. Cu cation is bound by residues H227, C262, C266, and H270.

This sequence belongs to the cytochrome c oxidase subunit 2 family. It depends on Cu cation as a cofactor. The cofactor is heme.

The protein localises to the cell membrane. It carries out the reaction 4 Fe(II)-[cytochrome c] + O2 + 8 H(+)(in) = 4 Fe(III)-[cytochrome c] + 2 H2O + 4 H(+)(out). Subunits I and II form the functional core of the enzyme complex. Electrons originating in cytochrome c are transferred via heme a and Cu(A) to the binuclear center formed by heme a3 and Cu(B). This Streptomyces avermitilis (strain ATCC 31267 / DSM 46492 / JCM 5070 / NBRC 14893 / NCIMB 12804 / NRRL 8165 / MA-4680) protein is Probable cytochrome c oxidase subunit 2 (ctaC).